Reading from the N-terminus, the 78-residue chain is Small ribosomal subunit protein uS17 (78 aa).

It belongs to the universal ribosomal protein uS17 family. Part of the 30S ribosomal subunit.

Functionally, one of the primary rRNA binding proteins, it binds specifically to the 5'-end of 16S ribosomal RNA. The sequence is that of Small ribosomal subunit protein uS17 from Pelagibacter ubique (strain HTCC1062).